Consider the following 210-residue polypeptide: GTP pyrophosphokinase YwaC (210 aa).

The protein belongs to the RelA/SpoT family. Homotetramer.

It catalyses the reaction GTP + ATP = guanosine 3'-diphosphate 5'-triphosphate + AMP. It participates in purine metabolism; ppGpp biosynthesis; ppGpp from GTP: step 1/2. Functions as a (p)ppGpp synthase; GDP can be used instead of GTP, resulting in an increase of (p)ppGpp synthesis. Overexpression in relA mutants (triple relA-yjbM-ywaC deletions and single relA deletions) leads to growth arrest; GTP levels fall drastically, various guanine-related nucleotides are synthesized (ppGp or pGpp), the cellular transcriptional profile changes dramatically and 70S ribosome dimerization occurs. Overexpression in the presence of a wild-type relA gene does not have these effects. In eubacteria ppGpp (guanosine 3'-diphosphate 5'-diphosphate) is a mediator of the stringent response that coordinates a variety of cellular activities in response to changes in nutritional abundance. activities in response to changes in nutritional abundance. YwaC has probably a minor role in stringent response. This Bacillus subtilis (strain 168) protein is GTP pyrophosphokinase YwaC (ywaC).